A 411-amino-acid chain; its full sequence is Exodeoxyribonuclease 7 large subunit (411 aa).

This sequence belongs to the XseA family. Heterooligomer composed of large and small subunits.

The protein resides in the cytoplasm. It catalyses the reaction Exonucleolytic cleavage in either 5'- to 3'- or 3'- to 5'-direction to yield nucleoside 5'-phosphates.. Functionally, bidirectionally degrades single-stranded DNA into large acid-insoluble oligonucleotides, which are then degraded further into small acid-soluble oligonucleotides. In Mycobacterium sp. (strain JLS), this protein is Exodeoxyribonuclease 7 large subunit.